The following is a 222-amino-acid chain: Leucyl/phenylalanyl-tRNA--protein transferase (222 aa).

The protein belongs to the L/F-transferase family.

It is found in the cytoplasm. It carries out the reaction N-terminal L-lysyl-[protein] + L-leucyl-tRNA(Leu) = N-terminal L-leucyl-L-lysyl-[protein] + tRNA(Leu) + H(+). The enzyme catalyses N-terminal L-arginyl-[protein] + L-leucyl-tRNA(Leu) = N-terminal L-leucyl-L-arginyl-[protein] + tRNA(Leu) + H(+). The catalysed reaction is L-phenylalanyl-tRNA(Phe) + an N-terminal L-alpha-aminoacyl-[protein] = an N-terminal L-phenylalanyl-L-alpha-aminoacyl-[protein] + tRNA(Phe). In terms of biological role, functions in the N-end rule pathway of protein degradation where it conjugates Leu, Phe and, less efficiently, Met from aminoacyl-tRNAs to the N-termini of proteins containing an N-terminal arginine or lysine. The sequence is that of Leucyl/phenylalanyl-tRNA--protein transferase from Legionella pneumophila (strain Lens).